A 545-amino-acid polypeptide reads, in one-letter code: Labda-7,13-dienyl diphosphate synthase (545 aa).

The DXDDTA motif motif lies at 315 to 320 (DADDTA). Positions 444 to 450 (RRTDGSW) match the RXXDGSW motif motif. The segment at 526 to 545 (LPAPAPVPPGFDAARTGPAD) is disordered.

It belongs to the terpene synthase family. It depends on Mg(2+) as a cofactor.

It carries out the reaction (2E,6E,10E)-geranylgeranyl diphosphate = (13E)-labda-7,13-dien-15-yl diphosphate. Its function is as follows. Involved in the biosynthesis of the labdane-type bicyclic diterpene labda-7,13(16),14-triene. Catalyzes the conversion of geranylgeranyl diphosphate (GGDP) into labda-7,13(E)-dienyl diphosphate. The sequence is that of Labda-7,13-dienyl diphosphate synthase from Streptomyces clavuligerus.